A 273-amino-acid chain; its full sequence is Formamidopyrimidine-DNA glycosylase (273 aa).

Pro2 (schiff-base intermediate with DNA) is an active-site residue. Glu3 (proton donor) is an active-site residue. Lys58 functions as the Proton donor; for beta-elimination activity in the catalytic mechanism. DNA-binding residues include His91 and Arg110. An FPG-type zinc finger spans residues 238–272 (QVYGKTDQPCARCATPIEKIKVGGRGTHFCPSCQK). Residue Arg262 is the Proton donor; for delta-elimination activity of the active site.

Belongs to the FPG family. As to quaternary structure, monomer. It depends on Zn(2+) as a cofactor.

It catalyses the reaction Hydrolysis of DNA containing ring-opened 7-methylguanine residues, releasing 2,6-diamino-4-hydroxy-5-(N-methyl)formamidopyrimidine.. The catalysed reaction is 2'-deoxyribonucleotide-(2'-deoxyribose 5'-phosphate)-2'-deoxyribonucleotide-DNA = a 3'-end 2'-deoxyribonucleotide-(2,3-dehydro-2,3-deoxyribose 5'-phosphate)-DNA + a 5'-end 5'-phospho-2'-deoxyribonucleoside-DNA + H(+). Involved in base excision repair of DNA damaged by oxidation or by mutagenic agents. Acts as a DNA glycosylase that recognizes and removes damaged bases. Has a preference for oxidized purines, such as 7,8-dihydro-8-oxoguanine (8-oxoG). Has AP (apurinic/apyrimidinic) lyase activity and introduces nicks in the DNA strand. Cleaves the DNA backbone by beta-delta elimination to generate a single-strand break at the site of the removed base with both 3'- and 5'-phosphates. The protein is Formamidopyrimidine-DNA glycosylase (mutM) of Streptococcus mutans serotype c (strain ATCC 700610 / UA159).